The following is a 301-amino-acid chain: UDP-N-acetylenolpyruvoylglucosamine reductase (301 aa).

The 165-residue stretch at 30-194 folds into the FAD-binding PCMH-type domain; the sequence is VGGEADYLVF…LSVKFALAPG (165 aa). Residue Arg173 is part of the active site. Ser223 functions as the Proton donor in the catalytic mechanism. Residue Glu293 is part of the active site.

The protein belongs to the MurB family. FAD serves as cofactor.

The protein localises to the cytoplasm. The enzyme catalyses UDP-N-acetyl-alpha-D-muramate + NADP(+) = UDP-N-acetyl-3-O-(1-carboxyvinyl)-alpha-D-glucosamine + NADPH + H(+). The protein operates within cell wall biogenesis; peptidoglycan biosynthesis. Its function is as follows. Cell wall formation. The sequence is that of UDP-N-acetylenolpyruvoylglucosamine reductase from Streptococcus pneumoniae (strain Hungary19A-6).